A 282-amino-acid chain; its full sequence is NADPH-dependent 7-cyano-7-deazaguanine reductase (282 aa).

Residue isoleucine 88 to serine 90 coordinates substrate. Serine 90–lysine 91 contributes to the NADPH binding site. The active-site Thioimide intermediate is cysteine 190. Aspartate 197 acts as the Proton donor in catalysis. Histidine 229–glutamate 230 lines the substrate pocket. Arginine 258–glycine 259 is a binding site for NADPH.

This sequence belongs to the GTP cyclohydrolase I family. QueF type 2 subfamily. Homodimer.

It is found in the cytoplasm. It catalyses the reaction 7-aminomethyl-7-carbaguanine + 2 NADP(+) = 7-cyano-7-deazaguanine + 2 NADPH + 3 H(+). Its pathway is tRNA modification; tRNA-queuosine biosynthesis. Catalyzes the NADPH-dependent reduction of 7-cyano-7-deazaguanine (preQ0) to 7-aminomethyl-7-deazaguanine (preQ1). The polypeptide is NADPH-dependent 7-cyano-7-deazaguanine reductase (Escherichia coli O157:H7).